The primary structure comprises 85 residues: Large ribosomal subunit protein bL27 (85 aa).

The disordered stretch occupies residues 1–20; that stretch reads MAHKKAGGSTRNGRDSEAKR.

Belongs to the bacterial ribosomal protein bL27 family.

The polypeptide is Large ribosomal subunit protein bL27 (Klebsiella pneumoniae (strain 342)).